The primary structure comprises 462 residues: MLDDTIAALATPPGEGGISIIRLSGSQAIAIVAKVFKPVKGPDLTTTRSHTLRLGFIIDPVSGESLDEVLVSVMRAPHSYTAEDVVEINCHGGALATSRVLQLVLRTGARLAEPGEFTRRAFLNGRLDLAQAEAVLEIIRARSSRGLTAALDHLRGNLSRKIGELNERLTGILAALEASMDFPEEVGEVDPENLADLRRILAGVDRLLATWEEGRLLTEGLKVAIVGRPNVGKSSLLNALLNQERAIVSNIPGTTRDTIEETLQLGGFTCRLIDTAGLRETADELESIGVARSKKAIAAADLVLVVVDLQTGIQDEDRRVLESVRDKVLIIIGNKLDLVAHDINKKLADLESFAGNYPRVAVSALKGKGLDELARKVQEIVLGGRALAGSDEPLITNARHRAALENCREHLASAIKAWEEGLPEDLIAIDLWSAADYLGEIIGTTAREDLLDRIFSDFCIGK.

Positions 22, 87, and 126 each coordinate (6S)-5-formyl-5,6,7,8-tetrahydrofolate. The region spanning 220–382 (GLKVAIVGRP…LARKVQEIVL (163 aa)) is the TrmE-type G domain. N230 serves as a coordination point for K(+). Residues 230-235 (NVGKSS), 249-255 (SNIPGTT), and 274-277 (DTAG) each bind GTP. Residue S234 coordinates Mg(2+). K(+) contacts are provided by S249, I251, and T254. T255 lines the Mg(2+) pocket. (6S)-5-formyl-5,6,7,8-tetrahydrofolate is bound at residue K462.

Belongs to the TRAFAC class TrmE-Era-EngA-EngB-Septin-like GTPase superfamily. TrmE GTPase family. As to quaternary structure, homodimer. Heterotetramer of two MnmE and two MnmG subunits. It depends on K(+) as a cofactor.

The protein resides in the cytoplasm. In terms of biological role, exhibits a very high intrinsic GTPase hydrolysis rate. Involved in the addition of a carboxymethylaminomethyl (cmnm) group at the wobble position (U34) of certain tRNAs, forming tRNA-cmnm(5)s(2)U34. This is tRNA modification GTPase MnmE from Moorella thermoacetica (strain ATCC 39073 / JCM 9320).